We begin with the raw amino-acid sequence, 38 residues long: DNA binding protein ORF8 (38 aa).

Belongs to the microviridae J protein family.

Its subcellular location is the virion. It localises to the host cytoplasm. Its function is as follows. Mediates ssDNA packaging into virion, it locates to the internal surface of the capsid, thereby displacing the internal scaffolding protein during virion formation. Additionally, protein ORF8 plays a role in viral attachment to the host cell. The sequence is that of DNA binding protein ORF8 from Spiroplasma melliferum (SpV4).